A 412-amino-acid polypeptide reads, in one-letter code: Methylmalonic aciduria type A homolog, mitochondrial (412 aa).

Residues 1 to 15 (MVVRALVRAHPLSRI) constitute a mitochondrion transit peptide. GTP contacts are provided by residues 132 to 140 (GSPGVGKSS), Asp275, and 311 to 313 (SIM).

This sequence belongs to the SIMIBI class G3E GTPase family. ArgK/MeaB subfamily.

Its subcellular location is the mitochondrion. Functionally, may have GTPase activity. May also bind and hydrolyze ATP. May function as chaperone. Likely to have a role in propionyl-CoA metabolism and adenosylcobalamin synthesis. The protein is Methylmalonic aciduria type A homolog, mitochondrial of Caenorhabditis briggsae.